Here is a 201-residue protein sequence, read N- to C-terminus: NADH-quinone oxidoreductase subunit C (201 aa).

The protein belongs to the complex I 30 kDa subunit family. In terms of assembly, NDH-1 is composed of 14 different subunits. Subunits NuoB, C, D, E, F, and G constitute the peripheral sector of the complex.

It localises to the cell inner membrane. The enzyme catalyses a quinone + NADH + 5 H(+)(in) = a quinol + NAD(+) + 4 H(+)(out). NDH-1 shuttles electrons from NADH, via FMN and iron-sulfur (Fe-S) centers, to quinones in the respiratory chain. The immediate electron acceptor for the enzyme in this species is believed to be ubiquinone. Couples the redox reaction to proton translocation (for every two electrons transferred, four hydrogen ions are translocated across the cytoplasmic membrane), and thus conserves the redox energy in a proton gradient. This chain is NADH-quinone oxidoreductase subunit C, found in Mesorhizobium japonicum (strain LMG 29417 / CECT 9101 / MAFF 303099) (Mesorhizobium loti (strain MAFF 303099)).